Consider the following 238-residue polypeptide: Large ribosomal subunit protein uL2 (238 aa).

A disordered region spans residues histidine 200–lysine 238. A compositionally biased stretch (polar residues) spans glutamine 206–arginine 216. Basic residues predominate over residues lysine 223–lysine 238.

This sequence belongs to the universal ribosomal protein uL2 family. In terms of assembly, part of the 50S ribosomal subunit. Forms a bridge to the 30S subunit in the 70S ribosome.

In terms of biological role, one of the primary rRNA binding proteins. Required for association of the 30S and 50S subunits to form the 70S ribosome, for tRNA binding and peptide bond formation. It has been suggested to have peptidyltransferase activity; this is somewhat controversial. Makes several contacts with the 16S rRNA in the 70S ribosome. The sequence is that of Large ribosomal subunit protein uL2 from Saccharolobus islandicus (strain Y.N.15.51 / Yellowstone #2) (Sulfolobus islandicus).